The following is a 148-amino-acid chain: HTH-type transcriptional regulator BilQ (148 aa).

In terms of domain architecture, HTH marR-type spans 1-140 (MDFKNLQYES…LVKNLHVVKD (140 aa)). The segment at residues 54–77 (LNDVSTEFEVDKAHTTRTISRLEQ) is a DNA-binding region (H-T-H motif).

Transcription regulator that regulates expression of the bilirubin reductase operon (bilQ, bilR and bilS). This is HTH-type transcriptional regulator BilQ from Clostridioides difficile (strain CD3).